The following is a 280-amino-acid chain: Large ribosomal subunit protein uL2 (280 aa).

Disordered stretches follow at residues 27-59 (STPE…GGHK) and 225-280 (VMNP…KHSR). 2 stretches are compositionally biased toward basic residues: residues 37 to 59 (LHGR…GGHK) and 268 to 280 (IVRR…KHSR).

The protein belongs to the universal ribosomal protein uL2 family. In terms of assembly, part of the 50S ribosomal subunit. Forms a bridge to the 30S subunit in the 70S ribosome.

In terms of biological role, one of the primary rRNA binding proteins. Required for association of the 30S and 50S subunits to form the 70S ribosome, for tRNA binding and peptide bond formation. It has been suggested to have peptidyltransferase activity; this is somewhat controversial. Makes several contacts with the 16S rRNA in the 70S ribosome. This is Large ribosomal subunit protein uL2 from Mycobacterium bovis (strain ATCC BAA-935 / AF2122/97).